Reading from the N-terminus, the 282-residue chain is MRQTRGEASPSAVSLAFKFASLAVLCVLLLLMVILGYSNSSTKAKEVTVTTNGQLRDEKESLKLKNDSPDLLIKHLQTKQNMGDKTVYLTFDDGPSAVTTRLLDVLKSADVKATFFMLSPRMNEFKQAVKRAEKEGHALGLHGVTHNNRLFYQTPTSPLKEMQEARDTLQDITGYKTDLVRTPYGSKPSLTASQIRNLEKDGFVYWDWTIDSMDWKYRNSQYVTAVLQQLENMEHSSSSRPNVILMHDLPATVNALPVLINKLKEKGYSFGVLEDTMVPVHE.

The helical transmembrane segment at 15-35 (LAFKFASLAVLCVLLLLMVIL) threads the bilayer. Residues 85–271 (KTVYLTFDDG…KLKEKGYSFG (187 aa)) enclose the NodB homology domain.

The protein belongs to the polysaccharide deacetylase family.

It localises to the cell membrane. The polypeptide is Putative polysaccharide deacetylase YheN (yheN) (Bacillus subtilis (strain 168)).